A 279-amino-acid polypeptide reads, in one-letter code: Glycerol uptake facilitator protein (279 aa).

The Cytoplasmic segment spans residues 1 to 8; that stretch reads MTTAAPTP. Residues 9–37 traverse the membrane as a helical segment; the sequence is SLFGQCLAEFLGTALLIFFGTGCVAALKV. Residues 38–42 are Periplasmic-facing; the sequence is AGASF. A helical transmembrane segment spans residues 43 to 63; the sequence is GLWEISIIWGVGVSMAIYLSA. Residues 64-66 are Cytoplasmic-facing; sequence GVS. An intramembrane segment occupies 67–70; that stretch reads GAHL. An NPA 1 motif is present at residues 71-73; the sequence is NPA. Positions 71 to 81 form an intramembrane region, helical; that stretch reads NPAVSIALWLF. The Cytoplasmic portion of the chain corresponds to 82–87; it reads AGFEGR. The helical transmembrane segment at 88 to 111 threads the bilayer; it reads KLPFYITAQVAGAFCAAALVYTLY. Topologically, residues 112 to 146 are periplasmic; sequence SSLFIEFEQAQNIVRGSQDSLALASVFSTYPHPAL. The chain crosses the membrane as a helical span at residues 147-172; that stretch reads SVGQAFLVEVVITAILMAVIMALTDD. At 173–180 the chain is on the cytoplasmic side; the sequence is GNGLPRGP. The helical transmembrane segment at 181–197 threads the bilayer; the sequence is LAPLLIGLLIAVIGSAM. The Periplasmic segment spans residues 198–201; sequence GPLT. An intramembrane segment occupies 202 to 205; sequence GFAM. Residues 206-208 carry the NPA 2 motif; it reads NPA. Residues 206 to 219 constitute an intramembrane region (helical); the sequence is NPARDFGPKLMTYL. Topologically, residues 220-234 are periplasmic; the sequence is AGWGPIAFTGGREIP. Residues 235-257 traverse the membrane as a helical segment; it reads YFLVPIFAPILGACLGAGGYRVL. Topologically, residues 258–279 are cytoplasmic; that stretch reads IARHLPSAAAPAEAEPEKVRAS.

It belongs to the MIP/aquaporin (TC 1.A.8) family.

It localises to the cell inner membrane. The catalysed reaction is glycerol(in) = glycerol(out). Mediates glycerol diffusion across the cytoplasmic membrane via a pore-type mechanism. This chain is Glycerol uptake facilitator protein (glpF), found in Pseudomonas aeruginosa (strain ATCC 15692 / DSM 22644 / CIP 104116 / JCM 14847 / LMG 12228 / 1C / PRS 101 / PAO1).